Reading from the N-terminus, the 269-residue chain is Surfeit locus protein 4 (269 aa).

Transmembrane regions (helical) follow at residues L65 to L85, Y92 to W112, F179 to F199, L203 to W223, and T242 to M262. A Di-lysine motif motif is present at residues K266–W269.

This sequence belongs to the SURF4 family. Found in a complex composed at least of SURF4, TMED2 and TMED10. May interact with LMAN1. Interacts with ZFYVE27 and with KIF5A in a ZFYVE27-dependent manner. Interacts with STING1. Interacts with SAR1B. Interacts with TMEM41B.

It localises to the endoplasmic reticulum membrane. Its subcellular location is the endoplasmic reticulum-Golgi intermediate compartment membrane. It is found in the golgi apparatus membrane. In terms of biological role, endoplasmic reticulum cargo receptor that mediates the export of lipoproteins by recruiting cargos into COPII vesicles to facilitate their secretion. Acts as a cargo receptor for lipoproteins bearing both APOB and APOA1, thereby regulating lipoprotein delivery and the maintenance of lipid homeostasis. Synergizes with the GTPase SAR1B to mediate transport of circulating lipoproteins. Promotes the secretion of PCSK9. Also mediates the efficient secretion of erythropoietin (EPO). May also play a role in the maintenance of the architecture of the endoplasmic reticulum-Golgi intermediate compartment and of the Golgi. This Mus musculus (Mouse) protein is Surfeit locus protein 4.